A 330-amino-acid chain; its full sequence is GTPase Obg (330 aa).

Positions 1–159 constitute an Obg domain; sequence MHFIDEVKIY…MWIHLSLKLL (159 aa). The OBG-type G domain occupies 160 to 327; the sequence is SDVGLVGLPN…IVKLALETIK (168 aa). GTP is bound by residues 166–173, 191–195, 212–215, 279–282, and 308–310; these read GLPNAGKS, FTTLV, DIPG, NKCD, and STC. Residues Ser173 and Thr193 each coordinate Mg(2+).

Belongs to the TRAFAC class OBG-HflX-like GTPase superfamily. OBG GTPase family. In terms of assembly, monomer. Mg(2+) is required as a cofactor.

The protein localises to the cytoplasm. Its function is as follows. An essential GTPase which binds GTP, GDP and possibly (p)ppGpp with moderate affinity, with high nucleotide exchange rates and a fairly low GTP hydrolysis rate. Plays a role in control of the cell cycle, stress response, ribosome biogenesis and in those bacteria that undergo differentiation, in morphogenesis control. This Rickettsia conorii (strain ATCC VR-613 / Malish 7) protein is GTPase Obg.